Consider the following 142-residue polypeptide: Succinate dehydrogenase subunit 6, mitochondrial (142 aa).

N-acetylglycine is present on Gly-2.

As to quaternary structure, component of complex II composed of eight subunits in plants: four classical SDH subunits SDH1, SDH2, SDH3 and SDH4 (a flavoprotein (FP), an iron-sulfur protein (IP), and a cytochrome b composed of a large and a small subunit.), as well as four subunits unknown in mitochondria from bacteria and heterotrophic eukaryotes.

The protein resides in the mitochondrion inner membrane. The protein operates within carbohydrate metabolism; tricarboxylic acid cycle. The polypeptide is Succinate dehydrogenase subunit 6, mitochondrial (Arabidopsis thaliana (Mouse-ear cress)).